The sequence spans 314 residues: Ribosomal RNA small subunit methyltransferase H (314 aa).

S-adenosyl-L-methionine-binding positions include Gly-36–His-38, Asp-56, Phe-80, Asp-102, and Gln-109.

The protein belongs to the methyltransferase superfamily. RsmH family.

Its subcellular location is the cytoplasm. The enzyme catalyses cytidine(1402) in 16S rRNA + S-adenosyl-L-methionine = N(4)-methylcytidine(1402) in 16S rRNA + S-adenosyl-L-homocysteine + H(+). Its function is as follows. Specifically methylates the N4 position of cytidine in position 1402 (C1402) of 16S rRNA. The protein is Ribosomal RNA small subunit methyltransferase H of Citrobacter koseri (strain ATCC BAA-895 / CDC 4225-83 / SGSC4696).